A 72-amino-acid polypeptide reads, in one-letter code: Translation initiation factor IF-1 (72 aa).

The 72-residue stretch at M1 to R72 folds into the S1-like domain.

Belongs to the IF-1 family. In terms of assembly, component of the 30S ribosomal translation pre-initiation complex which assembles on the 30S ribosome in the order IF-2 and IF-3, IF-1 and N-formylmethionyl-tRNA(fMet); mRNA recruitment can occur at any time during PIC assembly.

The protein resides in the cytoplasm. Its function is as follows. One of the essential components for the initiation of protein synthesis. Stabilizes the binding of IF-2 and IF-3 on the 30S subunit to which N-formylmethionyl-tRNA(fMet) subsequently binds. Helps modulate mRNA selection, yielding the 30S pre-initiation complex (PIC). Upon addition of the 50S ribosomal subunit IF-1, IF-2 and IF-3 are released leaving the mature 70S translation initiation complex. This Idiomarina loihiensis (strain ATCC BAA-735 / DSM 15497 / L2-TR) protein is Translation initiation factor IF-1.